The following is a 497-amino-acid chain: Glutamate--tRNA ligase (497 aa).

Residues 13-23 (PSPTGDPHVGT) carry the 'HIGH' region motif. Positions 253-257 (KISKR) match the 'KMSKS' region motif. K256 provides a ligand contact to ATP.

It belongs to the class-I aminoacyl-tRNA synthetase family. Glutamate--tRNA ligase type 1 subfamily. Monomer.

It is found in the cytoplasm. It carries out the reaction tRNA(Glu) + L-glutamate + ATP = L-glutamyl-tRNA(Glu) + AMP + diphosphate. Catalyzes the attachment of glutamate to tRNA(Glu) in a two-step reaction: glutamate is first activated by ATP to form Glu-AMP and then transferred to the acceptor end of tRNA(Glu). This Cutibacterium acnes (strain DSM 16379 / KPA171202) (Propionibacterium acnes) protein is Glutamate--tRNA ligase.